A 130-amino-acid polypeptide reads, in one-letter code: Small ribosomal subunit protein uS11 (130 aa).

It belongs to the universal ribosomal protein uS11 family. In terms of assembly, part of the 30S ribosomal subunit. Interacts with proteins S7 and S18. Binds to IF-3.

Its function is as follows. Located on the platform of the 30S subunit, it bridges several disparate RNA helices of the 16S rRNA. Forms part of the Shine-Dalgarno cleft in the 70S ribosome. The chain is Small ribosomal subunit protein uS11 from Phytoplasma mali (strain AT).